A 506-amino-acid polypeptide reads, in one-letter code: AMP phosphorylase (506 aa).

AMP is bound by residues glycine 167, 193–198 (SRAITG), and threonine 202. The active-site Proton donor is the aspartate 255. AMP-binding residues include serine 263 and lysine 287.

The protein belongs to the thymidine/pyrimidine-nucleoside phosphorylase family. Type 2 subfamily.

The catalysed reaction is AMP + phosphate = alpha-D-ribose 1,5-bisphosphate + adenine. The enzyme catalyses CMP + phosphate = cytosine + alpha-D-ribose 1,5-bisphosphate. It carries out the reaction UMP + phosphate = alpha-D-ribose 1,5-bisphosphate + uracil. Its function is as follows. Catalyzes the conversion of AMP and phosphate to adenine and ribose 1,5-bisphosphate (R15P). Exhibits phosphorylase activity toward CMP and UMP in addition to AMP. Functions in an archaeal AMP degradation pathway, together with R15P isomerase and RubisCO. The sequence is that of AMP phosphorylase from Methanosarcina acetivorans (strain ATCC 35395 / DSM 2834 / JCM 12185 / C2A).